A 160-amino-acid chain; its full sequence is Endoribonuclease YbeY (160 aa).

Residues histidine 121, histidine 125, and histidine 131 each coordinate Zn(2+).

The protein belongs to the endoribonuclease YbeY family. Requires Zn(2+) as cofactor.

It is found in the cytoplasm. In terms of biological role, single strand-specific metallo-endoribonuclease involved in late-stage 70S ribosome quality control and in maturation of the 3' terminus of the 16S rRNA. This chain is Endoribonuclease YbeY, found in Syntrophus aciditrophicus (strain SB).